The primary structure comprises 131 residues: MSWQAYVDDRLMCDIDGHHLTAAAILGHDGSVWAHSSTFPKFKPEEITAIMKDFDEPGSLAPTGLHLGGTKYMVIQGEGGAVIRGKKGSGGVTVKKTGQALVFGIYEEPLTPGQCNMIVERLGDYLIDQGL.

The protein belongs to the profilin family. Occurs in many kinds of cells as a complex with monomeric actin in a 1:1 ratio.

The protein resides in the cytoplasm. The protein localises to the cytoskeleton. Binds to actin and affects the structure of the cytoskeleton. At high concentrations, profilin prevents the polymerization of actin, whereas it enhances it at low concentrations. By binding to PIP2, it inhibits the formation of IP3 and DG. This chain is Profilin-1, found in Malus domestica (Apple).